The following is a 71-amino-acid chain: UPF0434 protein APH_0052 (71 aa).

Basic and acidic residues predominate over residues 52-63 (RKLQPEEPKEGS). Residues 52-71 (RKLQPEEPKEGSELQSSDNQ) are disordered.

Belongs to the UPF0434 family.

The polypeptide is UPF0434 protein APH_0052 (Anaplasma phagocytophilum (strain HZ)).